Consider the following 296-residue polypeptide: Cation-efflux pump FieF (296 aa).

Residues Met-1 to Ser-18 are Cytoplasmic-facing. The chain crosses the membrane as a helical span at residues Val-19–Ala-32. Over Trp-33–Ala-43 the chain is Periplasmic. A helical transmembrane segment spans residues Ser-44 to Ile-60. Zn(2+) is bound by residues Asp-47, Asp-51, Asp-70, His-73, and His-77. The Cytoplasmic segment spans residues Ala-61–Leu-83. Residues Ala-84–Glu-105 form a helical membrane-spanning segment. Over Arg-106–Gly-119 the chain is Periplasmic. Residues Val-120–Lys-138 traverse the membrane as a helical segment. Over Arg-139–Asn-145 the chain is Cytoplasmic. Residues Ser-146–Leu-160 form a helical membrane-spanning segment. Residues His-155 and Asp-159 each coordinate Zn(2+). At Phe-161–Ala-180 the chain is on the periplasmic side. The helical transmembrane segment at Asp-181 to Gly-200 threads the bilayer. The Cytoplasmic portion of the chain corresponds to Tyr-201–Gln-296. Residues His-234, Asp-235, His-250, His-263, His-285, and Asp-287 each contribute to the Zn(2+) site.

This sequence belongs to the cation diffusion facilitator (CDF) transporter (TC 2.A.4) family. FieF subfamily. Homodimer. The subunits are held together in a parallel orientation through zinc binding at the interface of the cytoplasmic domains.

It is found in the cell inner membrane. The catalysed reaction is Zn(2+)(in) + H(+)(out) = Zn(2+)(out) + H(+)(in). It carries out the reaction Cd(2+)(in) + H(+)(out) = Cd(2+)(out) + H(+)(in). It catalyses the reaction Fe(2+)(in) + H(+)(out) = Fe(2+)(out) + H(+)(in). Cytoplasmic zinc binding may trigger movements of two electrically repulsive cytoplasmic domains and reorient transmembrane helices, thereby modulating coordination geometry of the active site for zinc transport. It may modulate activity in response to cytoplasmic metal fluctuations. Divalent metal cation transporter which exports Zn(2+), Cd(2+) and possibly Fe(2+). Zn(2+)/H(+) antiporter capable of using the proton motive force to remove Zn(2+) from the cytoplasm. May be involved in zinc and iron detoxification by efflux. This is Cation-efflux pump FieF from Shewanella oneidensis (strain ATCC 700550 / JCM 31522 / CIP 106686 / LMG 19005 / NCIMB 14063 / MR-1).